Consider the following 94-residue polypeptide: Sucrose operon repressor (94 aa).

Positions 1–56 (MASLHDVARLAGVSKSTVSRVINDEYGVKEATKQKVRQAVAECGYVPNQVAKDLKE) constitute an HTH lacI-type domain. Positions 4 to 23 (LHDVARLAGVSKSTVSRVIN) form a DNA-binding region, H-T-H motif.

Functionally, repressor for the scr operon. Binds D-fructose as an inducer. In Vibrio alginolyticus, this protein is Sucrose operon repressor (scrR).